A 360-amino-acid chain; its full sequence is Phosphoserine aminotransferase (360 aa).

Arg-43 is an L-glutamate binding site. Pyridoxal 5'-phosphate contacts are provided by residues Ala-77–Ser-78, Trp-103, Thr-152, Asp-172, and Gln-195. Lys-196 bears the N6-(pyridoxal phosphate)lysine mark. Asn-237–Thr-238 is a pyridoxal 5'-phosphate binding site.

It belongs to the class-V pyridoxal-phosphate-dependent aminotransferase family. SerC subfamily. As to quaternary structure, homodimer. Pyridoxal 5'-phosphate serves as cofactor.

It localises to the cytoplasm. The catalysed reaction is O-phospho-L-serine + 2-oxoglutarate = 3-phosphooxypyruvate + L-glutamate. It carries out the reaction 4-(phosphooxy)-L-threonine + 2-oxoglutarate = (R)-3-hydroxy-2-oxo-4-phosphooxybutanoate + L-glutamate. It functions in the pathway amino-acid biosynthesis; L-serine biosynthesis; L-serine from 3-phospho-D-glycerate: step 2/3. The protein operates within cofactor biosynthesis; pyridoxine 5'-phosphate biosynthesis; pyridoxine 5'-phosphate from D-erythrose 4-phosphate: step 3/5. Its function is as follows. Catalyzes the reversible conversion of 3-phosphohydroxypyruvate to phosphoserine and of 3-hydroxy-2-oxo-4-phosphonooxybutanoate to phosphohydroxythreonine. This chain is Phosphoserine aminotransferase, found in Syntrophobacter fumaroxidans (strain DSM 10017 / MPOB).